The chain runs to 788 residues: Ribonucleoside-diphosphate reductase subunit alpha (788 aa).

An ATP-cone domain is found at 2-92 (ITVVKRNGRI…LYDLYHKVSG (91 aa)). Residues Lys6, 12 to 18 (EPLDITK), and Thr52 each bind ATP. Residue Thr200 participates in GDP binding. Cysteines 216 and 497 form a disulfide. DTTP contacts are provided by residues 223 to 225 (DNI) and Arg253. Asn424 provides a ligand contact to GDP. The active-site Proton acceptor is Asn424. Catalysis depends on Cys426, which acts as the Cysteine radical intermediate. GDP-binding positions include Glu428 and 661–663 (SSI). The active-site Proton acceptor is Glu428.

Belongs to the ribonucleoside diphosphate reductase large chain family. As to quaternary structure, tetramer of two alpha and two beta subunits.

It carries out the reaction a 2'-deoxyribonucleoside 5'-diphosphate + [thioredoxin]-disulfide + H2O = a ribonucleoside 5'-diphosphate + [thioredoxin]-dithiol. Under complex allosteric control mediated by deoxynucleoside triphosphates and ATP binding to separate specificity and activation sites on the alpha subunit. The type of nucleotide bound at the specificity site determines substrate preference. It seems probable that ATP makes the enzyme reduce CDP and UDP, dGTP favors ADP reduction and dTTP favors GDP reduction. Stimulated by ATP and inhibited by dATP binding to the activity site. Provides the precursors necessary for DNA synthesis. Catalyzes the biosynthesis of deoxyribonucleotides from the corresponding ribonucleotides. The polypeptide is Ribonucleoside-diphosphate reductase subunit alpha (nrdA) (Helicobacter pylori (strain ATCC 700392 / 26695) (Campylobacter pylori)).